Here is a 193-residue protein sequence, read N- to C-terminus: Segregation and condensation protein B (193 aa).

It belongs to the ScpB family. As to quaternary structure, homodimer. Homodimerization may be required to stabilize the binding of ScpA to the Smc head domains. Component of a cohesin-like complex composed of ScpA, ScpB and the Smc homodimer, in which ScpA and ScpB bind to the head domain of Smc. The presence of the three proteins is required for the association of the complex with DNA.

Its subcellular location is the cytoplasm. Functionally, participates in chromosomal partition during cell division. May act via the formation of a condensin-like complex containing Smc and ScpA that pull DNA away from mid-cell into both cell halves. The polypeptide is Segregation and condensation protein B (Streptococcus thermophilus (strain CNRZ 1066)).